We begin with the raw amino-acid sequence, 227 residues long: Phosphoribosylformylglycinamidine synthase subunit PurQ (227 aa).

The Glutamine amidotransferase type-1 domain occupies 3-227; the sequence is SSVITFPGSN…FFQNLINNLK (225 aa). The active-site Nucleophile is cysteine 85. Residues histidine 201 and glutamate 203 contribute to the active site.

Part of the FGAM synthase complex composed of 1 PurL, 1 PurQ and 2 PurS subunits.

The protein localises to the cytoplasm. The catalysed reaction is N(2)-formyl-N(1)-(5-phospho-beta-D-ribosyl)glycinamide + L-glutamine + ATP + H2O = 2-formamido-N(1)-(5-O-phospho-beta-D-ribosyl)acetamidine + L-glutamate + ADP + phosphate + H(+). It carries out the reaction L-glutamine + H2O = L-glutamate + NH4(+). It participates in purine metabolism; IMP biosynthesis via de novo pathway; 5-amino-1-(5-phospho-D-ribosyl)imidazole from N(2)-formyl-N(1)-(5-phospho-D-ribosyl)glycinamide: step 1/2. Part of the phosphoribosylformylglycinamidine synthase complex involved in the purines biosynthetic pathway. Catalyzes the ATP-dependent conversion of formylglycinamide ribonucleotide (FGAR) and glutamine to yield formylglycinamidine ribonucleotide (FGAM) and glutamate. The FGAM synthase complex is composed of three subunits. PurQ produces an ammonia molecule by converting glutamine to glutamate. PurL transfers the ammonia molecule to FGAR to form FGAM in an ATP-dependent manner. PurS interacts with PurQ and PurL and is thought to assist in the transfer of the ammonia molecule from PurQ to PurL. The polypeptide is Phosphoribosylformylglycinamidine synthase subunit PurQ (Pelagibacter ubique (strain HTCC1062)).